A 365-amino-acid polypeptide reads, in one-letter code: Crh-like protein ARB_03382 (365 aa).

An N-terminal signal peptide occupies residues 1-25 (MMASRRISVLSSLGLFACLLSPVVA). Residues 26-302 (QTFTYCNPLE…RWRELPTAAK (277 aa)) are Extracellular-facing. Cys31 and Cys39 are joined by a disulfide. Residues Asn48, Asn54, Asn63, and Asn77 are each glycosylated (N-linked (GlcNAc...) asparagine). Residues 50–243 (TTYLNSSLNP…YEKTPYIMSV (194 aa)) form the GH16 domain. Residue Glu125 is the Nucleophile of the active site. Glu129 acts as the Proton donor in catalysis. Chitin is bound at residue Glu129. Asn147 and Asn168 each carry an N-linked (GlcNAc...) asparagine glycan. Residues Arg209 and Trp213 each contribute to the chitin site. The chain crosses the membrane as a helical span at residues 303–323 (IAIFASIGGLVILGMAIIAFC). The Cytoplasmic segment spans residues 324–365 (CVKQRRAGRREFSMENSKFVEDQNNVMAMRTQWNHKYKPVGS).

It belongs to the glycosyl hydrolase 16 family. CRH1 subfamily.

The protein resides in the membrane. The catalysed reaction is Random endo-hydrolysis of N-acetyl-beta-D-glucosaminide (1-&gt;4)-beta-linkages in chitin and chitodextrins.. Its function is as follows. Dual chitinase/transglycosylase that plays a role in cell wall architecture. Chitinase and transglycosylase activities are coupled. Required for the polysaccharide cross-linking at the septa and the cell wall. More specifically, transfers chitin to 1,6-beta-glucan in the cell wall. Plays an important role in fungal pathogenesis. Involved in cell wall assembly and regeneration, filamentation, and adherence to host cells. The sequence is that of Crh-like protein ARB_03382 from Arthroderma benhamiae (strain ATCC MYA-4681 / CBS 112371) (Trichophyton mentagrophytes).